The chain runs to 365 residues: UDP-N-acetylglucosamine--N-acetylmuramyl-(pentapeptide) pyrophosphoryl-undecaprenol N-acetylglucosamine transferase (365 aa).

UDP-N-acetyl-alpha-D-glucosamine-binding positions include 13–15 (TGG), Asn125, Arg165, Ser192, and Gln293.

Belongs to the glycosyltransferase 28 family. MurG subfamily.

It localises to the cell inner membrane. It catalyses the reaction di-trans,octa-cis-undecaprenyl diphospho-N-acetyl-alpha-D-muramoyl-L-alanyl-D-glutamyl-meso-2,6-diaminopimeloyl-D-alanyl-D-alanine + UDP-N-acetyl-alpha-D-glucosamine = di-trans,octa-cis-undecaprenyl diphospho-[N-acetyl-alpha-D-glucosaminyl-(1-&gt;4)]-N-acetyl-alpha-D-muramoyl-L-alanyl-D-glutamyl-meso-2,6-diaminopimeloyl-D-alanyl-D-alanine + UDP + H(+). Its pathway is cell wall biogenesis; peptidoglycan biosynthesis. Cell wall formation. Catalyzes the transfer of a GlcNAc subunit on undecaprenyl-pyrophosphoryl-MurNAc-pentapeptide (lipid intermediate I) to form undecaprenyl-pyrophosphoryl-MurNAc-(pentapeptide)GlcNAc (lipid intermediate II). This chain is UDP-N-acetylglucosamine--N-acetylmuramyl-(pentapeptide) pyrophosphoryl-undecaprenol N-acetylglucosamine transferase, found in Ruegeria sp. (strain TM1040) (Silicibacter sp.).